The following is a 376-amino-acid chain: Alcohol dehydrogenase class-3 (376 aa).

The residue at position 1 (alanine 1) is an N-acetylalanine. Cysteine 47, histidine 69, cysteine 99, cysteine 102, cysteine 105, cysteine 113, and cysteine 176 together coordinate Zn(2+).

This sequence belongs to the zinc-containing alcohol dehydrogenase family. Class-III subfamily. As to quaternary structure, homodimer. Zn(2+) is required as a cofactor.

Its subcellular location is the cytoplasm. It catalyses the reaction a primary alcohol + NAD(+) = an aldehyde + NADH + H(+). It carries out the reaction a secondary alcohol + NAD(+) = a ketone + NADH + H(+). The enzyme catalyses S-(hydroxymethyl)glutathione + NADP(+) = S-formylglutathione + NADPH + H(+). The catalysed reaction is S-(hydroxymethyl)glutathione + NAD(+) = S-formylglutathione + NADH + H(+). It catalyses the reaction S-nitrosoglutathione + NADH + H(+) = S-(hydroxysulfenamide)glutathione + NAD(+). Its function is as follows. Class-III ADH is remarkably ineffective in oxidizing ethanol, but it readily catalyzes the oxidation of long-chain primary alcohols and the oxidation of S-(hydroxymethyl) glutathione. Also acts as a S-nitroso-glutathione reductase by catalyzing the NADH-dependent reduction of S-nitrosoglutathione, thereby regulating protein S-nitrosylation. The polypeptide is Alcohol dehydrogenase class-3 (Scyliorhinus canicula (Small-spotted catshark)).